We begin with the raw amino-acid sequence, 305 residues long: Mas-related G-protein coupled receptor member A8 (305 aa).

Over 1–17 (MDKTILGSIDIETLIRH) the chain is Extracellular. A helical transmembrane segment spans residues 18–38 (LMIIIFGLVGLTGNAIVFWLL). Topologically, residues 39–46 (GFHLHRNA) are cytoplasmic. Residues 47-67 (FLVYILNLALADFFYLLCHII) traverse the membrane as a helical segment. Residues 68 to 85 (NSIMFLLKVPSPNIILDH) are Extracellular-facing. The helical transmembrane segment at 86-106 (CFYTIMIVLYITGLSMLSAIS) threads the bilayer. Residues 107–129 (TERCLSVLCPIWYRCHRPEHTST) are Cytoplasmic-facing. Residues 130–150 (AMCAVIWVMSLLISILNGYFC) traverse the membrane as a helical segment. Residues Asn151 and Asn159 are each glycosylated (N-linked (GlcNAc...) asparagine). Over 151–172 (NFSSPKYVNNSVCQASDIFIRT) the chain is Extracellular. The helical transmembrane segment at 173 to 193 (YPIFLFVLLCLSTLALLARLF) threads the bilayer. Topologically, residues 194-207 (SGAGKRKFTRLFVT) are cytoplasmic. The helical transmembrane segment at 208–228 (IMLAILVFLLCGLPLGFFWFL) threads the bilayer. The Extracellular segment spans residues 229-243 (SPWIEDRFIVLDYRL). A helical transmembrane segment spans residues 244–264 (FFASVVLTVVNSCANPIIYFF). The Cytoplasmic segment spans residues 265-305 (VGSFRHRLKQQTLKMFLQRALQDTPETPENMVEMSRSKAEP).

Belongs to the G-protein coupled receptor 1 family. Mas subfamily. As to expression, expressed in a subset of sensory neurons that includes nociceptors. Expressed in the subclass of non-peptidergic sensory neurons that are IB4(+) and VR1(-).

The protein resides in the cell membrane. Its function is as follows. Orphan receptor. May be a receptor for RFamide-family neuropeptides such as NPFF and NPAF, which are analgesic in vivo. May regulate nociceptor function and/or development, including the sensation or modulation of pain. This is Mas-related G-protein coupled receptor member A8 (Mrgpra8) from Mus musculus (Mouse).